Here is a 405-residue protein sequence, read N- to C-terminus: Aspartokinase (405 aa).

2 ACT domains span residues 267–344 and 345–405; these read VSME…AKVS and IVGV…QLDQ.

It belongs to the aspartokinase family.

The enzyme catalyses L-aspartate + ATP = 4-phospho-L-aspartate + ADP. It participates in amino-acid biosynthesis; L-lysine biosynthesis via DAP pathway; (S)-tetrahydrodipicolinate from L-aspartate: step 1/4. Its pathway is amino-acid biosynthesis; L-methionine biosynthesis via de novo pathway; L-homoserine from L-aspartate: step 1/3. It functions in the pathway amino-acid biosynthesis; L-threonine biosynthesis; L-threonine from L-aspartate: step 1/5. The sequence is that of Aspartokinase (lysC) from Helicobacter pylori (strain ATCC 700392 / 26695) (Campylobacter pylori).